The chain runs to 154 residues: Endoribonuclease YbeY (154 aa).

Residues His113, His117, and His123 each coordinate Zn(2+).

This sequence belongs to the endoribonuclease YbeY family. Zn(2+) is required as a cofactor.

The protein localises to the cytoplasm. Single strand-specific metallo-endoribonuclease involved in late-stage 70S ribosome quality control and in maturation of the 3' terminus of the 16S rRNA. The protein is Endoribonuclease YbeY of Verminephrobacter eiseniae (strain EF01-2).